The chain runs to 285 residues: Bifunctional protein FolD (285 aa).

Residues 166–168, Ser-191, and Thr-232 each bind NADP(+); that span reads GRS.

It belongs to the tetrahydrofolate dehydrogenase/cyclohydrolase family. Homodimer.

It catalyses the reaction (6R)-5,10-methylene-5,6,7,8-tetrahydrofolate + NADP(+) = (6R)-5,10-methenyltetrahydrofolate + NADPH. The catalysed reaction is (6R)-5,10-methenyltetrahydrofolate + H2O = (6R)-10-formyltetrahydrofolate + H(+). Its pathway is one-carbon metabolism; tetrahydrofolate interconversion. Functionally, catalyzes the oxidation of 5,10-methylenetetrahydrofolate to 5,10-methenyltetrahydrofolate and then the hydrolysis of 5,10-methenyltetrahydrofolate to 10-formyltetrahydrofolate. This is Bifunctional protein FolD from Chloroflexus aggregans (strain MD-66 / DSM 9485).